We begin with the raw amino-acid sequence, 736 residues long: DNA topoisomerase 4 subunit A (736 aa).

The Topo IIA-type catalytic domain maps to 32-496 (LPDVRDGLKP…SFEQVTLTNQ (465 aa)). The O-(5'-phospho-DNA)-tyrosine intermediate role is filled by Y120.

Belongs to the type II topoisomerase GyrA/ParC subunit family. ParC type 1 subfamily. Heterotetramer composed of ParC and ParE.

Its subcellular location is the cell membrane. The enzyme catalyses ATP-dependent breakage, passage and rejoining of double-stranded DNA.. Functionally, topoisomerase IV is essential for chromosome segregation. It relaxes supercoiled DNA. Performs the decatenation events required during the replication of a circular DNA molecule. The protein is DNA topoisomerase 4 subunit A of Rickettsia bellii (strain RML369-C).